The primary structure comprises 234 residues: Hydrolase in agr operon (234 aa).

One can recognise a CN hydrolase domain in the interval 1-212 (ILYNKDTDVV…EKELTVTIDI (212 aa)). Catalysis depends on Glu-14, which acts as the Proton acceptor. Catalysis depends on Lys-83, which acts as the Proton donor. Cys-119 serves as the catalytic Nucleophile.

This sequence belongs to the carbon-nitrogen hydrolase superfamily. NIT1/NIT2 family.

The chain is Hydrolase in agr operon from Staphylococcus lugdunensis.